The sequence spans 483 residues: Xylulose kinase (483 aa).

79-80 (MH) serves as a coordination point for substrate.

Belongs to the FGGY kinase family.

The catalysed reaction is D-xylulose + ATP = D-xylulose 5-phosphate + ADP + H(+). Its function is as follows. Catalyzes the phosphorylation of D-xylulose to D-xylulose 5-phosphate. This Staphylococcus xylosus protein is Xylulose kinase.